The following is a 146-amino-acid chain: ATP synthase epsilon chain (146 aa).

The segment covering 92 to 116 (ISVDQARRDRDSLRKKLNEHERSEQ) has biased composition (basic and acidic residues). Residues 92 to 120 (ISVDQARRDRDSLRKKLNEHERSEQDPEV) are disordered.

This sequence belongs to the ATPase epsilon chain family. In terms of assembly, F-type ATPases have 2 components, CF(1) - the catalytic core - and CF(0) - the membrane proton channel. CF(1) has five subunits: alpha(3), beta(3), gamma(1), delta(1), epsilon(1). CF(0) has three main subunits: a, b and c.

The protein localises to the cell membrane. Its function is as follows. Produces ATP from ADP in the presence of a proton gradient across the membrane. This Cutibacterium acnes (strain DSM 16379 / KPA171202) (Propionibacterium acnes) protein is ATP synthase epsilon chain.